The chain runs to 354 residues: Rhodopsin (354 aa).

The Extracellular segment spans residues 1 to 36 (MNGTEGPAFYVPMSNATGVVRSPYEYPQYYLVAPWA). N-linked (GlcNAc...) asparagine glycosylation is found at Asn2 and Asn15. Residues 37 to 61 (YGLLAAYMFFLIITGFPVNFLTLYV) traverse the membrane as a helical segment. Topologically, residues 62–73 (TIEHKKLRTPLN) are cytoplasmic. The helical transmembrane segment at 74-96 (YILLNLAIADLFMVFGGFTTTMY) threads the bilayer. Topologically, residues 97–110 (TSLHGYFVFGRLGC) are extracellular. Cys110 and Cys187 form a disulfide bridge. A helical membrane pass occupies residues 111-133 (NLEGFFATLGGEMGLWSLVVLAI). The 'Ionic lock' involved in activated form stabilization signature appears at 134 to 136 (ERW). Residues 134–152 (ERWMVVCKPVSNFRFGENH) lie on the Cytoplasmic side of the membrane. The helical transmembrane segment at 153-173 (AIMGVAFTWVMACSCAVPPLV) threads the bilayer. Over 174–202 (GWSRYIPEGMQCSCGVDYYTRTPGVNNES) the chain is Extracellular. Asn200 carries N-linked (GlcNAc...) asparagine glycosylation. Residues 203 to 224 (FVIYMFIVHFFIPLIVIFFCYG) traverse the membrane as a helical segment. Topologically, residues 225-252 (RLVCTVKEAAAQQQESETTQRAEREVTR) are cytoplasmic. The helical transmembrane segment at 253–274 (MVIIMVIAFLICWLPYAGVAWY) threads the bilayer. The Extracellular segment spans residues 275-286 (IFTHQGSEFGPV). The helical transmembrane segment at 287–308 (FMTLPAFFAKTSAVYNPCIYIC) threads the bilayer. N6-(retinylidene)lysine is present on Lys296. The Cytoplasmic segment spans residues 309–354 (MNKQFRHCMITTLCCGKNPFEEEEGASTTASKTEASSVSSSSVSPA). The segment at 333–354 (GASTTASKTEASSVSSSSVSPA) is disordered. Low complexity predominate over residues 334–354 (ASTTASKTEASSVSSSSVSPA).

This sequence belongs to the G-protein coupled receptor 1 family. Opsin subfamily. In terms of processing, phosphorylated on some or all of the serine and threonine residues present in the C-terminal region. Contains one covalently linked retinal chromophore. As to expression, retinal rod photoreceptor cells, predominantly in the outer segments (at protein level). Retinal rod photoreceptor cells.

The protein resides in the membrane. It localises to the cell projection. Its subcellular location is the cilium. The protein localises to the photoreceptor outer segment. In terms of biological role, photoreceptor required for image-forming vision at low light intensity. While most salt water fish species use retinal as chromophore, most freshwater fish use 3-dehydroretinal, or a mixture of retinal and 3-dehydroretinal. Light-induced isomerization of 11-cis to all-trans retinal triggers a conformational change that activates signaling via G-proteins. Subsequent receptor phosphorylation mediates displacement of the bound G-protein alpha subunit by arrestin and terminates signaling. The sequence is that of Rhodopsin (rho) from Danio rerio (Zebrafish).